Here is a 702-residue protein sequence, read N- to C-terminus: Ribosomal RNA large subunit methyltransferase K/L (702 aa).

Residues 43–154 (LIYQSLMWSR…KETASIALDL (112 aa)) form the THUMP domain.

The protein belongs to the methyltransferase superfamily. RlmKL family.

Its subcellular location is the cytoplasm. It carries out the reaction guanosine(2445) in 23S rRNA + S-adenosyl-L-methionine = N(2)-methylguanosine(2445) in 23S rRNA + S-adenosyl-L-homocysteine + H(+). The enzyme catalyses guanosine(2069) in 23S rRNA + S-adenosyl-L-methionine = N(2)-methylguanosine(2069) in 23S rRNA + S-adenosyl-L-homocysteine + H(+). In terms of biological role, specifically methylates the guanine in position 2445 (m2G2445) and the guanine in position 2069 (m7G2069) of 23S rRNA. The chain is Ribosomal RNA large subunit methyltransferase K/L from Salmonella agona (strain SL483).